The sequence spans 227 residues: Urease accessory protein UreF (227 aa).

The protein belongs to the UreF family. As to quaternary structure, ureD, UreF and UreG form a complex that acts as a GTP-hydrolysis-dependent molecular chaperone, activating the urease apoprotein by helping to assemble the nickel containing metallocenter of UreC. The UreE protein probably delivers the nickel.

The protein resides in the cytoplasm. Functionally, required for maturation of urease via the functional incorporation of the urease nickel metallocenter. The sequence is that of Urease accessory protein UreF from Actinobacillus pleuropneumoniae serotype 5b (strain L20).